A 157-amino-acid chain; its full sequence is Monooxygenase CPUR_05417 (157 aa).

The protein belongs to the avfA family.

Its pathway is secondary metabolite biosynthesis. In terms of biological role, monooxygenase; part of the ergochrome gene cluster responsible for the typical purple-black color of the ergot sclerotia. The ergochrome gene cluster produces several ergot pigments including the yellow ergochrome secalonic acid and its derivatives, as well as the red anthraquinones endocrocin and clavorubin. The pathway begins with the synthesis of atrochrysone thioester by the polyketide synthase (PKS) CPUR_05437. The atrochrysone carboxyl ACP thioesterase CPUR_05436 then breaks the thioester bond and releases the atrochrysone carboxylic acid from CPUR_05437. The atrochrysone carboxylic acid is then converted to atrochrysone which is further transformed into emodin anthrone. The next step is performed by the anthrone oxygenase CPUR_05434 that catalyzes the oxidation of emodinanthrone to emodin. Emodin is further modified to yield monodictyphenone via several steps involving CPUR_05427, CPUR_05428, CPUR_05429 and CPUR_05430. The short chain dehydrogenase/reductase CPUR_05418 then catalyzes the C-5 ketoreduction to give the xanthone skeleton of the monomeric units. Ergochromes formation requires further dimerization steps of different xanthone units, probably catalyzed by the cytochrome P450 monooxygenase CPUR_05419. CPUR_05425, CPUR_05426 and CPUR_05431 are unique to Claviceps, thus it is likely that they are involved in further modification of xanthone units or in their dimerization. The yellow ergochromes and the red anthraquinone pigments endocrocin and clavorubin are products from the same PKS derived precursors and the latter are likely shunt products in the pathway of xanthone biosynthesis. It is proposed that atrochrysone carboxylic acid released from the PKS CPUR_05437 can also be converted to endocrocin anthrone which is further oxidized into endocrocin by CPUR_05435. Endocrocin could be then modified to clavorubin, possibly by CPUR_05423 and CPUR_05431. Clavorubin is the principal anthraquinone metabolite produced by the cluster with a much higher yield compared to endocrocin. The protein is Monooxygenase CPUR_05417 of Claviceps purpurea (strain 20.1) (Ergot fungus).